The chain runs to 103 residues: uncharacterized protein (103 aa).

Residues 33 to 57 (GYVAAIVAGPVSMSPLDWICPLLAI) traverse the membrane as a helical segment.

Its subcellular location is the membrane. This is an uncharacterized protein from Sinorhizobium fredii (strain NBRC 101917 / NGR234).